The primary structure comprises 109 residues: Thiosulfate sulfurtransferase GlpE (109 aa).

A Rhodanese domain is found at 17–105 (HQQTAVLVDI…WHRHFPAEVA (89 aa)). The active-site Cysteine persulfide intermediate is the cysteine 65.

The protein belongs to the GlpE family.

The protein localises to the cytoplasm. It catalyses the reaction thiosulfate + hydrogen cyanide = thiocyanate + sulfite + 2 H(+). The catalysed reaction is thiosulfate + [thioredoxin]-dithiol = [thioredoxin]-disulfide + hydrogen sulfide + sulfite + 2 H(+). In terms of biological role, transferase that catalyzes the transfer of sulfur from thiosulfate to thiophilic acceptors such as cyanide or dithiols. May function in a CysM-independent thiosulfate assimilation pathway by catalyzing the conversion of thiosulfate to sulfite, which can then be used for L-cysteine biosynthesis. The chain is Thiosulfate sulfurtransferase GlpE from Klebsiella pneumoniae (strain 342).